A 124-amino-acid chain; its full sequence is Small ribosomal subunit protein uS12 (124 aa).

The residue at position 89 (aspartate 89) is a 3-methylthioaspartic acid. Lysine 108 carries the post-translational modification N6-acetyllysine.

It belongs to the universal ribosomal protein uS12 family. As to quaternary structure, part of the 30S ribosomal subunit. Contacts proteins S8 and S17. May interact with IF1 in the 30S initiation complex.

In terms of biological role, with S4 and S5 plays an important role in translational accuracy. Functionally, interacts with and stabilizes bases of the 16S rRNA that are involved in tRNA selection in the A site and with the mRNA backbone. Located at the interface of the 30S and 50S subunits, it traverses the body of the 30S subunit contacting proteins on the other side and probably holding the rRNA structure together. The combined cluster of proteins S8, S12 and S17 appears to hold together the shoulder and platform of the 30S subunit. In Escherichia coli (strain K12 / MC4100 / BW2952), this protein is Small ribosomal subunit protein uS12.